We begin with the raw amino-acid sequence, 315 residues long: 4-hydroxy-3-methylbut-2-enyl diphosphate reductase (315 aa).

Cys12 provides a ligand contact to [4Fe-4S] cluster. The (2E)-4-hydroxy-3-methylbut-2-enyl diphosphate site is built by His43 and His81. Residues His43 and His81 each contribute to the dimethylallyl diphosphate site. 2 residues coordinate isopentenyl diphosphate: His43 and His81. Cys103 lines the [4Fe-4S] cluster pocket. Residue His131 coordinates (2E)-4-hydroxy-3-methylbut-2-enyl diphosphate. Residue His131 participates in dimethylallyl diphosphate binding. His131 lines the isopentenyl diphosphate pocket. Residue Glu133 is the Proton donor of the active site. Residue Thr170 coordinates (2E)-4-hydroxy-3-methylbut-2-enyl diphosphate. Cys198 lines the [4Fe-4S] cluster pocket. Residues Ser226, Asn228, and Ser271 each coordinate (2E)-4-hydroxy-3-methylbut-2-enyl diphosphate. Dimethylallyl diphosphate is bound by residues Ser226, Asn228, and Ser271. Residues Ser226, Asn228, and Ser271 each contribute to the isopentenyl diphosphate site.

Belongs to the IspH family. [4Fe-4S] cluster serves as cofactor.

It catalyses the reaction isopentenyl diphosphate + 2 oxidized [2Fe-2S]-[ferredoxin] + H2O = (2E)-4-hydroxy-3-methylbut-2-enyl diphosphate + 2 reduced [2Fe-2S]-[ferredoxin] + 2 H(+). It carries out the reaction dimethylallyl diphosphate + 2 oxidized [2Fe-2S]-[ferredoxin] + H2O = (2E)-4-hydroxy-3-methylbut-2-enyl diphosphate + 2 reduced [2Fe-2S]-[ferredoxin] + 2 H(+). Its pathway is isoprenoid biosynthesis; dimethylallyl diphosphate biosynthesis; dimethylallyl diphosphate from (2E)-4-hydroxy-3-methylbutenyl diphosphate: step 1/1. It participates in isoprenoid biosynthesis; isopentenyl diphosphate biosynthesis via DXP pathway; isopentenyl diphosphate from 1-deoxy-D-xylulose 5-phosphate: step 6/6. Functionally, catalyzes the conversion of 1-hydroxy-2-methyl-2-(E)-butenyl 4-diphosphate (HMBPP) into a mixture of isopentenyl diphosphate (IPP) and dimethylallyl diphosphate (DMAPP). Acts in the terminal step of the DOXP/MEP pathway for isoprenoid precursor biosynthesis. The polypeptide is 4-hydroxy-3-methylbut-2-enyl diphosphate reductase (Bacillus cytotoxicus (strain DSM 22905 / CIP 110041 / 391-98 / NVH 391-98)).